Here is a 118-residue protein sequence, read N- to C-terminus: Beta-2-microglobulin (118 aa).

The N-terminal stretch at 1–21 (MGSRWGIAVLGLFCFVSCLEA) is a signal peptide. An Ig-like C1-type domain is found at 26–113 (PKIQVYSRHP…VHEGVKKTVK (88 aa)). A disulfide bond links Cys46 and Cys101.

This sequence belongs to the beta-2-microglobulin family. As to quaternary structure, heterodimer of an alpha chain and a beta chain. Beta-2-microglobulin is the beta-chain of major histocompatibility complex class I molecules.

It is found in the secreted. Functionally, component of the class I major histocompatibility complex (MHC). Involved in the presentation of peptide antigens to the immune system. This chain is Beta-2-microglobulin (B2M), found in Ornithorhynchus anatinus (Duckbill platypus).